A 767-amino-acid polypeptide reads, in one-letter code: 5-methyltetrahydropteroyltriglutamate--homocysteine methyltransferase (767 aa).

Residue K19 participates in 5-methyltetrahydropteroyltri-L-glutamate binding. A Phosphoserine modification is found at S89. N126 is a 5-methyltetrahydropteroyltri-L-glutamate binding site. At S242 the chain carries Phosphoserine. L-homocysteine is bound by residues 444-446 and E497; that span reads IGS. L-methionine contacts are provided by residues 444–446 and E497; that span reads IGS. Residues D502, Y525, and 528–529 each bind 5-methyltetrahydropteroyltri-L-glutamate; that span reads RY. T566 carries the post-translational modification Phosphothreonine. A 5-methyltetrahydropteroyltri-L-glutamate-binding site is contributed by W574. D612 contacts L-homocysteine. D612 lines the L-methionine pocket. S629 carries the post-translational modification Phosphoserine. Residues H655, C657, and E677 each coordinate Zn(2+). H705 (proton donor) is an active-site residue. S706 is modified (phosphoserine). C737 contacts Zn(2+).

This sequence belongs to the vitamin-B12 independent methionine synthase family. Zn(2+) serves as cofactor.

It catalyses the reaction 5-methyltetrahydropteroyltri-L-glutamate + L-homocysteine = tetrahydropteroyltri-L-glutamate + L-methionine. It functions in the pathway amino-acid biosynthesis; L-methionine biosynthesis via de novo pathway; L-methionine from L-homocysteine (MetE route): step 1/1. In terms of biological role, catalyzes the transfer of a methyl group from 5-methyltetrahydrofolate to homocysteine resulting in methionine formation. The polypeptide is 5-methyltetrahydropteroyltriglutamate--homocysteine methyltransferase (MET6) (Saccharomyces cerevisiae (strain ATCC 204508 / S288c) (Baker's yeast)).